The chain runs to 406 residues: tRNA-specific 2-thiouridylase MnmA (406 aa).

Residues 42–49 and leucine 68 contribute to the ATP site; that span reads GLSGGVDS. Cysteine 129 acts as the Nucleophile in catalysis. Cysteines 129 and 237 form a disulfide. Position 154 (glycine 154) interacts with ATP. The tract at residues 187-189 is interaction with tRNA; that stretch reads KDQ. Cysteine 237 (cysteine persulfide intermediate) is an active-site residue. The interaction with tRNA stretch occupies residues 342–343; that stretch reads RY.

It belongs to the MnmA/TRMU family.

The protein resides in the cytoplasm. The enzyme catalyses S-sulfanyl-L-cysteinyl-[protein] + uridine(34) in tRNA + AH2 + ATP = 2-thiouridine(34) in tRNA + L-cysteinyl-[protein] + A + AMP + diphosphate + H(+). Functionally, catalyzes the 2-thiolation of uridine at the wobble position (U34) of tRNA, leading to the formation of s(2)U34. This is tRNA-specific 2-thiouridylase MnmA from Prochlorococcus marinus (strain MIT 9211).